A 308-amino-acid polypeptide reads, in one-letter code: Sulfoquinovosyl glycerol transport system permease protein SmoG (308 aa).

The next 6 membrane-spanning stretches (helical) occupy residues 28-48 (LAVL…VYPV), 92-112 (VLIT…LALL), 126-146 (SLLI…AWFF), 164-184 (GIIW…TIIW), 223-243 (ITLP…TITA), and 279-299 (LGYG…VTAV). One can recognise an ABC transmembrane type-1 domain in the interval 88 to 300 (TWNTVLITLI…ALSMCVTAVY (213 aa)).

The protein belongs to the binding-protein-dependent transport system permease family. As to quaternary structure, the complex is probably composed of two ATP-binding proteins (SmoE), two transmembrane proteins (SmoG and SmoH) and a solute-binding protein (SmoF).

The protein localises to the cell inner membrane. Functionally, part of the ABC transporter complex SmoEFGH involved in sulfoquinovosyl glycerol (SQGro) uptake. Responsible for the translocation of the substrate across the membrane. This chain is Sulfoquinovosyl glycerol transport system permease protein SmoG, found in Agrobacterium fabrum (strain C58 / ATCC 33970) (Agrobacterium tumefaciens (strain C58)).